Here is a 273-residue protein sequence, read N- to C-terminus: Ribosomal RNA small subunit methyltransferase A (273 aa).

Residues Asn18, Leu20, Gly45, Glu66, Asp91, and Asn113 each coordinate S-adenosyl-L-methionine.

The protein belongs to the class I-like SAM-binding methyltransferase superfamily. rRNA adenine N(6)-methyltransferase family. RsmA subfamily.

Its subcellular location is the cytoplasm. It carries out the reaction adenosine(1518)/adenosine(1519) in 16S rRNA + 4 S-adenosyl-L-methionine = N(6)-dimethyladenosine(1518)/N(6)-dimethyladenosine(1519) in 16S rRNA + 4 S-adenosyl-L-homocysteine + 4 H(+). Functionally, specifically dimethylates two adjacent adenosines (A1518 and A1519) in the loop of a conserved hairpin near the 3'-end of 16S rRNA in the 30S particle. May play a critical role in biogenesis of 30S subunits. This is Ribosomal RNA small subunit methyltransferase A from Salmonella newport (strain SL254).